The following is a 152-amino-acid chain: Large ribosomal subunit protein bL9 (152 aa).

It belongs to the bacterial ribosomal protein bL9 family.

In terms of biological role, binds to the 23S rRNA. This is Large ribosomal subunit protein bL9 from Prochlorococcus marinus (strain NATL2A).